Reading from the N-terminus, the 157-residue chain is Regulatory protein RecX (157 aa).

Belongs to the RecX family.

It localises to the cytoplasm. Modulates RecA activity. The protein is Regulatory protein RecX of Leptothrix cholodnii (strain ATCC 51168 / LMG 8142 / SP-6) (Leptothrix discophora (strain SP-6)).